An 81-amino-acid polypeptide reads, in one-letter code: ATP synthase subunit c (81 aa).

2 consecutive transmembrane segments (helical) span residues 7 to 27 (AASV…PGIG) and 57 to 77 (LAFM…LLFA).

It belongs to the ATPase C chain family. In terms of assembly, F-type ATPases have 2 components, F(1) - the catalytic core - and F(0) - the membrane proton channel. F(1) has five subunits: alpha(3), beta(3), gamma(1), delta(1), epsilon(1). F(0) has four main subunits: a(1), b(1), b'(1) and c(10-14). The alpha and beta chains form an alternating ring which encloses part of the gamma chain. F(1) is attached to F(0) by a central stalk formed by the gamma and epsilon chains, while a peripheral stalk is formed by the delta, b and b' chains.

Its subcellular location is the cellular thylakoid membrane. Its function is as follows. F(1)F(0) ATP synthase produces ATP from ADP in the presence of a proton or sodium gradient. F-type ATPases consist of two structural domains, F(1) containing the extramembraneous catalytic core and F(0) containing the membrane proton channel, linked together by a central stalk and a peripheral stalk. During catalysis, ATP synthesis in the catalytic domain of F(1) is coupled via a rotary mechanism of the central stalk subunits to proton translocation. In terms of biological role, key component of the F(0) channel; it plays a direct role in translocation across the membrane. A homomeric c-ring of between 10-14 subunits forms the central stalk rotor element with the F(1) delta and epsilon subunits. This chain is ATP synthase subunit c, found in Synechococcus sp. (strain CC9311).